Here is a 122-residue protein sequence, read N- to C-terminus: Small ribosomal subunit protein uS13 (122 aa).

The segment at 97 to 122 (PVRGQKTKSNARTRKGPRPSRIKKKK) is disordered. Residues 101–122 (QKTKSNARTRKGPRPSRIKKKK) show a composition bias toward basic residues.

It belongs to the universal ribosomal protein uS13 family. As to quaternary structure, part of the 30S ribosomal subunit. Forms a loose heterodimer with protein S19. Forms two bridges to the 50S subunit in the 70S ribosome.

Its function is as follows. Located at the top of the head of the 30S subunit, it contacts several helices of the 16S rRNA. In the 70S ribosome it contacts the 23S rRNA (bridge B1a) and protein L5 of the 50S subunit (bridge B1b), connecting the 2 subunits; these bridges are implicated in subunit movement. Contacts the tRNAs in the A and P-sites. The chain is Small ribosomal subunit protein uS13 from Thermosipho melanesiensis (strain DSM 12029 / CIP 104789 / BI429).